The sequence spans 292 residues: THO complex subunit 4B (292 aa).

The tract at residues 1–50 is disordered; that stretch reads MSGGLDMSLDDIIKSNRKPTGSRGRGGIGGGNNTGGRGGSGSNSGPSRRF. An N-acetylserine modification is found at Ser2. Residues 23–42 show a composition bias toward gly residues; sequence RGRGGIGGGNNTGGRGGSGS. In terms of domain architecture, RRM spans 108–185; the sequence is TKLYISNLDY…KLMKIEIVGT (78 aa). Over residues 241–252 the composition is skewed to gly residues; the sequence is GGGFGGGNFRGG. Residues 241–292 form a disordered region; the sequence is GGGFGGGNFRGGRGARGRGGRGSGGRGRDENVSAEDLDAELDKYHKEAMETS. A compositionally biased stretch (basic and acidic residues) spans 280-292; that stretch reads ELDKYHKEAMETS.

The protein belongs to the ALYREF family. In terms of assembly, interacts with RH15 and RH56.

The protein resides in the nucleus. The protein localises to the nucleoplasm. In terms of biological role, export adapter involved in nuclear export of spliced and unspliced mRNA. The chain is THO complex subunit 4B (ALY2) from Arabidopsis thaliana (Mouse-ear cress).